The primary structure comprises 86 residues: Putative membrane protein insertion efficiency factor (86 aa).

The interval 66–86 (PLHEGGDDPVPPRKNDDNREN) is disordered.

The protein belongs to the UPF0161 family.

It localises to the cell inner membrane. Its function is as follows. Could be involved in insertion of integral membrane proteins into the membrane. In Proteus mirabilis (strain HI4320), this protein is Putative membrane protein insertion efficiency factor.